Consider the following 346-residue polypeptide: Inositol 2-dehydrogenase/D-chiro-inositol 3-dehydrogenase (346 aa).

This sequence belongs to the Gfo/Idh/MocA family. As to quaternary structure, homotetramer.

It catalyses the reaction myo-inositol + NAD(+) = scyllo-inosose + NADH + H(+). The enzyme catalyses 1D-chiro-inositol + NAD(+) = scyllo-inosine + NADH + H(+). It participates in polyol metabolism; myo-inositol degradation into acetyl-CoA; acetyl-CoA from myo-inositol: step 1/7. Functionally, involved in the oxidation of myo-inositol (MI) and D-chiro-inositol (DCI) to 2-keto-myo-inositol (2KMI or 2-inosose) and 1-keto-D-chiro-inositol (1KDCI), respectively. The polypeptide is Inositol 2-dehydrogenase/D-chiro-inositol 3-dehydrogenase (Lacticaseibacillus casei (Lactobacillus casei)).